Consider the following 419-residue polypeptide: Serine hydroxymethyltransferase (419 aa).

Residues leucine 119 and 123-125 (GHL) contribute to the (6S)-5,6,7,8-tetrahydrofolate site. The residue at position 228 (lysine 228) is an N6-(pyridoxal phosphate)lysine.

This sequence belongs to the SHMT family. In terms of assembly, homodimer. It depends on pyridoxal 5'-phosphate as a cofactor.

The protein resides in the cytoplasm. The catalysed reaction is (6R)-5,10-methylene-5,6,7,8-tetrahydrofolate + glycine + H2O = (6S)-5,6,7,8-tetrahydrofolate + L-serine. Its pathway is one-carbon metabolism; tetrahydrofolate interconversion. The protein operates within amino-acid biosynthesis; glycine biosynthesis; glycine from L-serine: step 1/1. Catalyzes the reversible interconversion of serine and glycine with tetrahydrofolate (THF) serving as the one-carbon carrier. This reaction serves as the major source of one-carbon groups required for the biosynthesis of purines, thymidylate, methionine, and other important biomolecules. Also exhibits THF-independent aldolase activity toward beta-hydroxyamino acids, producing glycine and aldehydes, via a retro-aldol mechanism. The protein is Serine hydroxymethyltransferase of Desulfosudis oleivorans (strain DSM 6200 / JCM 39069 / Hxd3) (Desulfococcus oleovorans).